The following is a 197-amino-acid chain: Stanniocalcin-2 (197 aa).

Positions 1-20 (TDAXNPPEGPQDRGSQQKGR) are disordered.

Belongs to the stanniocalcin family. Homodimer; disulfide-linked.

Its subcellular location is the secreted. Functionally, has an anti-hypocalcemic action on calcium and phosphate homeostasis. In Cavia porcellus (Guinea pig), this protein is Stanniocalcin-2 (STC2).